The chain runs to 98 residues: MAVDNLQYEGEDLLLRLVLQPKSSRDQFIGLLGDELKIAITAPPVDGKANAHLIKFLSKQFKVAKGAIIIEKGLLSRHKRVRVCAPKKMPEFFNSLNE.

Belongs to the UPF0235 family.

The sequence is that of UPF0235 protein Ping_3043 from Psychromonas ingrahamii (strain DSM 17664 / CCUG 51855 / 37).